The chain runs to 166 residues: NAD(P)H-quinone oxidoreductase subunit I, chloroplastic (166 aa).

4Fe-4S ferredoxin-type domains are found at residues 55–84 (GRIHFEFDKCIACEVCVRVCPIDLPVVDWK) and 95–124 (LNYSIDFGVCIFCGNCVEYCPTNCLSMTEE). 8 residues coordinate [4Fe-4S] cluster: C64, C67, C70, C74, C104, C107, C110, and C114.

This sequence belongs to the complex I 23 kDa subunit family. As to quaternary structure, NDH is composed of at least 16 different subunits, 5 of which are encoded in the nucleus. It depends on [4Fe-4S] cluster as a cofactor.

It is found in the plastid. It localises to the chloroplast thylakoid membrane. The enzyme catalyses a plastoquinone + NADH + (n+1) H(+)(in) = a plastoquinol + NAD(+) + n H(+)(out). The catalysed reaction is a plastoquinone + NADPH + (n+1) H(+)(in) = a plastoquinol + NADP(+) + n H(+)(out). NDH shuttles electrons from NAD(P)H:plastoquinone, via FMN and iron-sulfur (Fe-S) centers, to quinones in the photosynthetic chain and possibly in a chloroplast respiratory chain. The immediate electron acceptor for the enzyme in this species is believed to be plastoquinone. Couples the redox reaction to proton translocation, and thus conserves the redox energy in a proton gradient. The protein is NAD(P)H-quinone oxidoreductase subunit I, chloroplastic of Enydra sessilis (Smallray swampwort).